The chain runs to 273 residues: Programmed cell death 1 ligand 2 (273 aa).

The signal sequence occupies residues 1–19 (MIFLLLMLSLELQLHQIAA). Residues 20–220 (LFTVTVPKEL…SQMEPRTHPT (201 aa)) are Extracellular-facing. The 98-residue stretch at 21-118 (FTVTVPKELY…AWDYKYLTLK (98 aa)) folds into the Ig-like V-type domain. 5 N-linked (GlcNAc...) asparagine glycosylation sites follow: Asn-37, Asn-64, Asn-157, Asn-163, and Asn-189. Intrachain disulfides connect Cys-42–Cys-102 and Cys-143–Cys-192. Positions 122–203 (SYRKINTHIL…FWNTHVRELT (82 aa)) constitute an Ig-like C2-type domain. The chain crosses the membrane as a helical span at residues 221-241 (WLLHIFIPFCIIAFIFIATVI). Over 242–273 (ALRKQLCQKLYSSKDTTKRPVTTTKREVNSAI) the chain is Cytoplasmic.

It belongs to the immunoglobulin superfamily. BTN/MOG family. Interacts with PDCD1. As to expression, highly expressed in heart, placenta, pancreas, lung and liver and weakly expressed in spleen, lymph nodes and thymus.

It is found in the secreted. The protein localises to the endomembrane system. It localises to the cell membrane. Involved in the costimulatory signal, essential for T-cell proliferation and IFNG production in a PDCD1-independent manner. Interaction with PDCD1 inhibits T-cell proliferation by blocking cell cycle progression and cytokine production. The polypeptide is Programmed cell death 1 ligand 2 (PDCD1LG2) (Homo sapiens (Human)).